Here is a 1148-residue protein sequence, read N- to C-terminus: Small G protein signaling modulator 1 (1148 aa).

One can recognise an RUN domain in the interval 36–190; the sequence is HEDSSHIISF…EYTKMKTADH (155 aa). Residues 256–297 form an important for interaction with RAB9A and RAB9B region; sequence LLYGKNNVLVQPRDDMEAVPGYLSLHQTADVMTLKWTPNQLM. The segment at 301–350 is required for interaction with RAP family members; sequence VGDLDYEKSVYWDYAMTIRLEEIVYLHCHQQVDSGGTVVLVSQDGIQRPP. Disordered regions lie at residues 377–411, 700–830, and 871–894; these read DPPLWSQRGKGKVFPKLRKRSPQGSAESTSSDKDD, DSTI…PREE, and GWRSSETEKHGQADSEDNLSEEPE. The span at 385–397 shows a compositional bias: basic residues; it reads GKGKVFPKLRKRS. Residues 617-1081 form the Rab-GAP TBC domain; sequence GIQPEIRKAV…LVWETIWAAK (465 aa). Positions 702 to 716 are enriched in polar residues; it reads TISNESSQSCSSGRQ. Positions 742–751 are enriched in basic and acidic residues; it reads AEGRLEEKQP. Residues 757-802 show a composition bias toward polar residues; sequence NLVNGTCSPDSGHPSSHNFSSGLSEHSEPSLSTEDSVLDAQRNTPT. Composition is skewed to basic and acidic residues over residues 805–816 and 871–883; these read RPRDGSVDDRQS and GWRSSETEKHGQA. Residues 884–894 are compositionally biased toward acidic residues; that stretch reads DSEDNLSEEPE.

The protein belongs to the RUTBC family. As to quaternary structure, interacts with RAB9A (GTP-bound form) and RAB9B (GTP-bound form); has much lower affinity for GDP-bound RAB9A and RAB9B. Interacts with RAB3A, RAB4A, RAB5A, RAB8A, RAB11A, RAP1A, RAP1B, RAP2A and RAP2B. No interaction with RAB27A. As to expression, mainly expressed in brain, heart and testis.

It localises to the golgi apparatus. The protein resides in the trans-Golgi network. It is found in the cytoplasmic vesicle membrane. Its subcellular location is the cytoplasm. Its function is as follows. Interacts with numerous Rab family members, functioning as Rab effector for some, and as GTPase activator for others. Promotes GTP hydrolysis by RAB34 and RAB36. Probably functions as a GTPase effector with RAB9A and RAB9B; does not stimulate GTP hydrolysis with RAB9A and RAB9B. In Homo sapiens (Human), this protein is Small G protein signaling modulator 1 (SGSM1).